We begin with the raw amino-acid sequence, 204 residues long: Holliday junction branch migration complex subunit RuvA (204 aa).

Residues Met-1–Met-64 form a domain I region. The interval Thr-65 to Ala-143 is domain II. The tract at residues Leu-144–Gly-151 is flexible linker. The domain III stretch occupies residues Val-152–Arg-204.

Belongs to the RuvA family. In terms of assembly, homotetramer. Forms an RuvA(8)-RuvB(12)-Holliday junction (HJ) complex. HJ DNA is sandwiched between 2 RuvA tetramers; dsDNA enters through RuvA and exits via RuvB. An RuvB hexamer assembles on each DNA strand where it exits the tetramer. Each RuvB hexamer is contacted by two RuvA subunits (via domain III) on 2 adjacent RuvB subunits; this complex drives branch migration. In the full resolvosome a probable DNA-RuvA(4)-RuvB(12)-RuvC(2) complex forms which resolves the HJ.

It localises to the cytoplasm. Functionally, the RuvA-RuvB-RuvC complex processes Holliday junction (HJ) DNA during genetic recombination and DNA repair, while the RuvA-RuvB complex plays an important role in the rescue of blocked DNA replication forks via replication fork reversal (RFR). RuvA specifically binds to HJ cruciform DNA, conferring on it an open structure. The RuvB hexamer acts as an ATP-dependent pump, pulling dsDNA into and through the RuvAB complex. HJ branch migration allows RuvC to scan DNA until it finds its consensus sequence, where it cleaves and resolves the cruciform DNA. This is Holliday junction branch migration complex subunit RuvA from Rhizobium etli (strain ATCC 51251 / DSM 11541 / JCM 21823 / NBRC 15573 / CFN 42).